We begin with the raw amino-acid sequence, 39 residues long: U1-nemetoxin-Csp1c (39 aa).

Cystine bridges form between cysteine 1/cysteine 15, cysteine 8/cysteine 19, cysteine 14/cysteine 36, and cysteine 25/cysteine 32.

As to expression, expressed by the venom gland.

It localises to the secreted. Its function is as follows. Causes paralysis to insect larvae (H.virescens). This toxin is active only on insects. In Calisoga sp. (Spider), this protein is U1-nemetoxin-Csp1c.